Reading from the N-terminus, the 61-residue chain is Small ribosomal subunit protein uS14 (61 aa).

4 residues coordinate Zn(2+): cysteine 24, cysteine 27, cysteine 40, and cysteine 43.

The protein belongs to the universal ribosomal protein uS14 family. Zinc-binding uS14 subfamily. In terms of assembly, part of the 30S ribosomal subunit. Contacts proteins S3 and S10. Requires Zn(2+) as cofactor.

Binds 16S rRNA, required for the assembly of 30S particles and may also be responsible for determining the conformation of the 16S rRNA at the A site. The polypeptide is Small ribosomal subunit protein uS14 (Anaeromyxobacter dehalogenans (strain 2CP-1 / ATCC BAA-258)).